Reading from the N-terminus, the 534-residue chain is Serine/threonine-protein kinase NLK (534 aa).

Sufficient for interaction with DAPK3 regions lie at residues leucine 8–histidine 132 and histidine 131–isoleucine 423. Required for interaction with TAB2 regions lie at residues leucine 8–glutamine 311 and tyrosine 441–glutamate 534. Disordered regions lie at residues alanine 29–alanine 79 and glutamine 97–proline 147. The span at glycine 33–histidine 61 shows a compositional bias: basic residues. The segment covering proline 110–alanine 126 has biased composition (low complexity). Residues lysine 129 to histidine 138 show a composition bias toward basic residues. Positions isoleucine 145–leucine 434 constitute a Protein kinase domain. Residues isoleucine 151 to valine 159 and lysine 174 contribute to the ATP site. Aspartate 271 acts as the Proton acceptor in catalysis. Position 305 is a phosphothreonine; by autocatalysis (threonine 305). The TQE motif lies at threonine 305–glutamate 307. Residues aspartate 435–glutamate 534 form a required for homodimerization and kinase activation and localization to the nucleus region. Serine 529 carries the phosphoserine modification.

It belongs to the protein kinase superfamily. CMGC Ser/Thr protein kinase family. MAP kinase subfamily. In terms of assembly, homodimer. Homodimerization is required for intermolecular autophosphorylation, kinase activation and nuclear localization. May interact with components of cullin-RING-based SCF (SKP1-CUL1-F-box protein) E3 ubiquitin-protein ligase complexes. Interacts with LEF1, MEF2A, MYBL1 and MYBL2. Interacts with the upstream activating kinases HIPK2 and MAP3K7/TAK1. Interaction with MAP3K7/TAK1 seems to be indirect, and may be mediated by other proteins such as STAT3, TAB1 and TAB2. Interacts with and phosphorylates a number of transcription factors including FOXO1, FOXO3, FOXO4, MYB, NOTCH1 and TCF7L2/TCF4. Interacts with DAPK3/ZIPK, and this interaction may disrupt interaction with transcription factors such as TCF7L2/TCF4. Forms a transcriptional repressor complex with CHD7, PPARG and SETDB1. Interacts with RNF138/NARF. Interacts with ATF5; the interaction stabilizes ATF5 at the protein level in a kinase-independent manner. Requires Mg(2+) as cofactor. Phosphorylated on Thr-305. Intermolecular autophosphorylation on Thr-305 activates the enzyme.

Its subcellular location is the nucleus. It is found in the cytoplasm. The catalysed reaction is L-seryl-[protein] + ATP = O-phospho-L-seryl-[protein] + ADP + H(+). The enzyme catalyses L-threonyl-[protein] + ATP = O-phospho-L-threonyl-[protein] + ADP + H(+). Activated by the non-canonical Wnt signaling pathway, in which WNT5A leads to activation of MAP3K7/TAK1 and HIPK2, which subsequently phosphorylates and activates this protein. Activated by dimerization and subsequent intermolecular autophosphorylation on Thr-305. Other cytokines such as IL6 may also activate this regulatory circuit. Functionally, serine/threonine-protein kinase that regulates a number of transcription factors with key roles in cell fate determination. Positive effector of the non-canonical Wnt signaling pathway, acting downstream of WNT5A, MAP3K7/TAK1 and HIPK2. Negative regulator of the canonical Wnt/beta-catenin signaling pathway. Binds to and phosphorylates TCF7L2/TCF4 and LEF1, promoting the dissociation of the TCF7L2/LEF1/beta-catenin complex from DNA, as well as the ubiquitination and subsequent proteolysis of LEF1. Together these effects inhibit the transcriptional activation of canonical Wnt/beta-catenin target genes. Negative regulator of the Notch signaling pathway. Binds to and phosphorylates NOTCH1, thereby preventing the formation of a transcriptionally active ternary complex of NOTCH1, RBPJ/RBPSUH and MAML1. Negative regulator of the MYB family of transcription factors. Phosphorylation of MYB leads to its subsequent proteolysis while phosphorylation of MYBL1 and MYBL2 inhibits their interaction with the coactivator CREBBP. Other transcription factors may also be inhibited by direct phosphorylation of CREBBP itself. Acts downstream of IL6 and MAP3K7/TAK1 to phosphorylate STAT3, which is in turn required for activation of NLK by MAP3K7/TAK1. Upon IL1B stimulus, cooperates with ATF5 to activate the transactivation activity of C/EBP subfamily members. Phosphorylates ATF5 but also stabilizes ATF5 protein levels in a kinase-independent manner. Acts as an inhibitor of the mTORC1 complex in response to osmotic stress by mediating phosphorylation of RPTOR, thereby preventing recruitment of the mTORC1 complex to lysosomes. This is Serine/threonine-protein kinase NLK (NLK) from Bos taurus (Bovine).